Consider the following 524-residue polypeptide: Glucose-6-phosphate isomerase (524 aa).

E322 functions as the Proton donor in the catalytic mechanism. Active-site residues include H351 and K453.

The protein belongs to the GPI family.

It localises to the cytoplasm. It carries out the reaction alpha-D-glucose 6-phosphate = beta-D-fructose 6-phosphate. It functions in the pathway carbohydrate biosynthesis; gluconeogenesis. The protein operates within carbohydrate degradation; glycolysis; D-glyceraldehyde 3-phosphate and glycerone phosphate from D-glucose: step 2/4. Functionally, catalyzes the reversible isomerization of glucose-6-phosphate to fructose-6-phosphate. The sequence is that of Glucose-6-phosphate isomerase from Prochlorococcus marinus (strain NATL2A).